The primary structure comprises 132 residues: Agouti-signaling protein (132 aa).

The N-terminal stretch at 1–22 (MDVTRLLLATLLVFLCFFTVYS) is a signal peptide. N39 carries an N-linked (GlcNAc...) asparagine glycan. The interval 62–93 (ISRKEAEKKRSSKKEASMKKVAQPRTPLSAPC) is disordered. The span at 63–79 (SRKEAEKKRSSKKEASM) shows a compositional bias: basic and acidic residues. Cystine bridges form between C93–C108, C100–C114, C107–C125, C111–C132, and C116–C123. The region spanning 93-132 (CVATRDSCKPPAPACCDPCASCQCRFFRSACSCRVLSLNC) is the Agouti domain.

It is found in the secreted. Its function is as follows. Involved in the regulation of melanogenesis. The binding of ASP to MC1R precludes alpha-MSH initiated signaling and thus blocks production of cAMP, leading to a down-regulation of eumelanogenesis (brown/black pigment) and thus increasing synthesis of pheomelanin (yellow/red pigment). The protein is Agouti-signaling protein (ASIP) of Trachypithecus auratus (Javan langur).